The chain runs to 354 residues: Sulfate/thiosulfate import ATP-binding protein CysA 2 (354 aa).

The region spanning 3–237 (IHIQQVNKHF…PSNPFVYEFL (235 aa)) is the ABC transporter domain. 35–42 (GPSGSGKT) serves as a coordination point for ATP.

This sequence belongs to the ABC transporter superfamily. Sulfate/tungstate importer (TC 3.A.1.6) family. In terms of assembly, the complex is composed of two ATP-binding proteins (CysA), two transmembrane proteins (CysT and CysW) and a solute-binding protein (CysP).

The protein localises to the cell inner membrane. It catalyses the reaction sulfate(out) + ATP + H2O = sulfate(in) + ADP + phosphate + H(+). The catalysed reaction is thiosulfate(out) + ATP + H2O = thiosulfate(in) + ADP + phosphate + H(+). In terms of biological role, part of the ABC transporter complex CysAWTP involved in sulfate/thiosulfate import. Responsible for energy coupling to the transport system. In Shewanella oneidensis (strain ATCC 700550 / JCM 31522 / CIP 106686 / LMG 19005 / NCIMB 14063 / MR-1), this protein is Sulfate/thiosulfate import ATP-binding protein CysA 2.